Here is a 380-residue protein sequence, read N- to C-terminus: Queuine tRNA-ribosyltransferase (380 aa).

Catalysis depends on D96, which acts as the Proton acceptor. Substrate is bound by residues 96-100 (DSGGF), D150, Q193, and G220. The RNA binding stretch occupies residues 251–257 (GVGAPDS). D270 (nucleophile) is an active-site residue. The segment at 275-279 (TRIAR) is RNA binding; important for wobble base 34 recognition. Zn(2+)-binding residues include C308, C310, C313, and H339.

The protein belongs to the queuine tRNA-ribosyltransferase family. Homodimer. Within each dimer, one monomer is responsible for RNA recognition and catalysis, while the other monomer binds to the replacement base PreQ1. Zn(2+) serves as cofactor.

It carries out the reaction 7-aminomethyl-7-carbaguanine + guanosine(34) in tRNA = 7-aminomethyl-7-carbaguanosine(34) in tRNA + guanine. Its pathway is tRNA modification; tRNA-queuosine biosynthesis. In terms of biological role, catalyzes the base-exchange of a guanine (G) residue with the queuine precursor 7-aminomethyl-7-deazaguanine (PreQ1) at position 34 (anticodon wobble position) in tRNAs with GU(N) anticodons (tRNA-Asp, -Asn, -His and -Tyr). Catalysis occurs through a double-displacement mechanism. The nucleophile active site attacks the C1' of nucleotide 34 to detach the guanine base from the RNA, forming a covalent enzyme-RNA intermediate. The proton acceptor active site deprotonates the incoming PreQ1, allowing a nucleophilic attack on the C1' of the ribose to form the product. After dissociation, two additional enzymatic reactions on the tRNA convert PreQ1 to queuine (Q), resulting in the hypermodified nucleoside queuosine (7-(((4,5-cis-dihydroxy-2-cyclopenten-1-yl)amino)methyl)-7-deazaguanosine). In Streptococcus sanguinis (strain SK36), this protein is Queuine tRNA-ribosyltransferase.